A 310-amino-acid polypeptide reads, in one-letter code: Aspartate carbamoyltransferase catalytic subunit (310 aa).

Residues Arg57 and Thr58 each contribute to the carbamoyl phosphate site. Lys86 serves as a coordination point for L-aspartate. Carbamoyl phosphate contacts are provided by Arg107, His135, and Gln138. L-aspartate contacts are provided by Arg168 and Arg229. Carbamoyl phosphate-binding residues include Leu268 and Pro269.

The protein belongs to the aspartate/ornithine carbamoyltransferase superfamily. ATCase family. In terms of assembly, heterooligomer of catalytic and regulatory chains.

It catalyses the reaction carbamoyl phosphate + L-aspartate = N-carbamoyl-L-aspartate + phosphate + H(+). It functions in the pathway pyrimidine metabolism; UMP biosynthesis via de novo pathway; (S)-dihydroorotate from bicarbonate: step 2/3. In terms of biological role, catalyzes the condensation of carbamoyl phosphate and aspartate to form carbamoyl aspartate and inorganic phosphate, the committed step in the de novo pyrimidine nucleotide biosynthesis pathway. The chain is Aspartate carbamoyltransferase catalytic subunit from Thermococcus kodakarensis (strain ATCC BAA-918 / JCM 12380 / KOD1) (Pyrococcus kodakaraensis (strain KOD1)).